Reading from the N-terminus, the 59-residue chain is Anti-inflammatory peptide amregulin (59 aa).

The signal sequence occupies residues 1 to 19 (MKLHMLNMLNCLLLTVCDG).

Salivary glands.

The protein resides in the secreted. In terms of biological role, anti-inflammatory peptide that may facilitate successful blood feeding of ticks and may lead to immunotolerance in its host. Inhibits the secretion of inflammatory factors in rat splenocytes, such as tumor necrosis factor-alpha (TNF), interleukin-1, interleukin-8 (CXCL8) and interferon-gamma (IFNG). In addition, shows strong free radical scavenging and antioxidant activities in vitro. In vivo, inhibits adjuvant-induced paw inflammation in mouse models. The sequence is that of Anti-inflammatory peptide amregulin from Amblyomma variegatum (Tropical bont tick).